The sequence spans 258 residues: 4-hydroxy-tetrahydrodipicolinate reductase (258 aa).

NAD(+) is bound by residues 9 to 14 (GASGRM), 91 to 93 (GTT), and 115 to 118 (SPNM). Catalysis depends on His-148, which acts as the Proton donor/acceptor. His-149 serves as a coordination point for (S)-2,3,4,5-tetrahydrodipicolinate. Lys-152 functions as the Proton donor in the catalytic mechanism. A (S)-2,3,4,5-tetrahydrodipicolinate-binding site is contributed by 158–159 (GT).

The protein belongs to the DapB family.

The protein localises to the cytoplasm. The enzyme catalyses (S)-2,3,4,5-tetrahydrodipicolinate + NAD(+) + H2O = (2S,4S)-4-hydroxy-2,3,4,5-tetrahydrodipicolinate + NADH + H(+). It carries out the reaction (S)-2,3,4,5-tetrahydrodipicolinate + NADP(+) + H2O = (2S,4S)-4-hydroxy-2,3,4,5-tetrahydrodipicolinate + NADPH + H(+). The protein operates within amino-acid biosynthesis; L-lysine biosynthesis via DAP pathway; (S)-tetrahydrodipicolinate from L-aspartate: step 4/4. Catalyzes the conversion of 4-hydroxy-tetrahydrodipicolinate (HTPA) to tetrahydrodipicolinate. The polypeptide is 4-hydroxy-tetrahydrodipicolinate reductase (Lawsonia intracellularis (strain PHE/MN1-00)).